The following is a 233-amino-acid chain: ATP synthase subunit a (233 aa).

The next 5 helical transmembrane spans lie at 29-49 (FKHVFYTWCAMAILFSLGLIV), 86-106 (VFPLLGGIFLFILFQNLLGLV), 118-135 (TNAAMALFVFGYYNYQGL), 188-208 (VLFFLMAPIVGTLPVYFLFLL), and 209-229 (GKVLQAFIFFMLTMVYLKGAF).

The protein belongs to the ATPase A chain family. F-type ATPases have 2 components, CF(1) - the catalytic core - and CF(0) - the membrane proton channel. CF(1) has five subunits: alpha(3), beta(3), gamma(1), delta(1), epsilon(1). CF(0) has three main subunits: a(1), b(2) and c(9-12). The alpha and beta chains form an alternating ring which encloses part of the gamma chain. CF(1) is attached to CF(0) by a central stalk formed by the gamma and epsilon chains, while a peripheral stalk is formed by the delta and b chains.

It localises to the cell inner membrane. Functionally, key component of the proton channel; it plays a direct role in the translocation of protons across the membrane. This Nitratidesulfovibrio vulgaris (strain ATCC 29579 / DSM 644 / CCUG 34227 / NCIMB 8303 / VKM B-1760 / Hildenborough) (Desulfovibrio vulgaris) protein is ATP synthase subunit a.